A 271-amino-acid polypeptide reads, in one-letter code: Mannosyl-3-phosphoglycerate phosphatase (271 aa).

D13 acts as the Nucleophile in catalysis. Mg(2+)-binding residues include D13, D15, and D214.

It belongs to the HAD-like hydrolase superfamily. MPGP family. Mg(2+) is required as a cofactor.

It localises to the cytoplasm. The catalysed reaction is 2-O-(alpha-D-mannosyl)-3-phosphoglycerate + H2O = (2R)-2-O-(alpha-D-mannosyl)-glycerate + phosphate. The protein is Mannosyl-3-phosphoglycerate phosphatase (yedP) of Shigella boydii serotype 4 (strain Sb227).